The sequence spans 180 residues: NADH-quinone oxidoreductase subunit I (180 aa).

2 4Fe-4S ferredoxin-type domains span residues Leu-50–Ala-80 and Glu-90–Asp-119. Cys-60, Cys-63, Cys-66, Cys-70, Cys-99, Cys-102, Cys-105, and Cys-109 together coordinate [4Fe-4S] cluster.

This sequence belongs to the complex I 23 kDa subunit family. NDH-1 is composed of 13 different subunits. Subunits NuoA, H, J, K, L, M, N constitute the membrane sector of the complex. Requires [4Fe-4S] cluster as cofactor.

It localises to the cell inner membrane. The enzyme catalyses a quinone + NADH + 5 H(+)(in) = a quinol + NAD(+) + 4 H(+)(out). In terms of biological role, NDH-1 shuttles electrons from NADH, via FMN and iron-sulfur (Fe-S) centers, to quinones in the respiratory chain. The immediate electron acceptor for the enzyme in this species is believed to be ubiquinone. Couples the redox reaction to proton translocation (for every two electrons transferred, four hydrogen ions are translocated across the cytoplasmic membrane), and thus conserves the redox energy in a proton gradient. The sequence is that of NADH-quinone oxidoreductase subunit I from Shigella boydii serotype 4 (strain Sb227).